The following is a 277-amino-acid chain: Putative thiosulfate sulfurtransferase (277 aa).

Rhodanese domains follow at residues 18–125 (HAPK…PLSS) and 154–274 (AINV…APIE). Residue C233 is the Cysteine persulfide intermediate of the active site. Substrate is bound at residue R238.

The catalysed reaction is thiosulfate + hydrogen cyanide = thiocyanate + sulfite + 2 H(+). May be a sulfotransferase involved in the formation of thiosulfate. In Mycobacterium tuberculosis (strain CDC 1551 / Oshkosh), this protein is Putative thiosulfate sulfurtransferase (cysA1).